The sequence spans 520 residues: Ribonuclease Y (520 aa).

The chain crosses the membrane as a helical span at residues 3–23 (FILVLCTVSSLFVGGGTGIFL). The 64-residue stretch at 209-272 (TVTAVTLPSE…QVAKMALERL (64 aa)) folds into the KH domain. The 95-residue stretch at 335-429 (VLRHSIEVAS…VQASDCLSGA (95 aa)) folds into the HD domain.

This sequence belongs to the RNase Y family.

Its subcellular location is the cell membrane. In terms of biological role, endoribonuclease that initiates mRNA decay. This Lawsonia intracellularis (strain PHE/MN1-00) protein is Ribonuclease Y.